The chain runs to 317 residues: MVRENKAAWKAQYFIKVVELFDEFPKCFIVGADNVGSKQMQNIRTSLRGLAVVLMGKNTMMRKAIRGHLENNPQLEKLLPHIKGNVGFVFTKGDLAEVRDKLLESKVRAPARPGAIAPLHVIIPAQNTGLGPEKTSFFQALSIPTKISKGTIEIINDVPILKPGDKVGASEATLLNMLNISPFSYGLIVNQVYDSGSIFSPEILDIKPEDLRAKFQQGVANLAAVCLSVGYPTIASAPHSIANGFKNLLAIAATTEVEFKEATTIKEYIKDPSKFAAAASASAAPAAGGATEKKEEAKKPESESEEEDDDMGFGLFD.

The span at 280 to 290 (SASAAPAAGGA) shows a compositional bias: low complexity. Residues 280–317 (SASAAPAAGGATEKKEEAKKPESESEEEDDDMGFGLFD) are disordered. A compositionally biased stretch (basic and acidic residues) spans 291–302 (TEKKEEAKKPES). S302 is modified (phosphoserine). A Phosphoserine; by CK1 modification is found at S304.

Belongs to the universal ribosomal protein uL10 family. P0 forms a pentameric complex by interaction with dimers of P1 and P2.

The protein resides in the cytoplasm. It localises to the nucleus. Ribosomal protein P0 is the functional equivalent of E.coli protein L10. This is Large ribosomal subunit protein uL10 (RpLP0) from Drosophila melanogaster (Fruit fly).